Consider the following 89-residue polypeptide: UPF0367 protein PMM0124 (89 aa).

The protein belongs to the UPF0367 family.

The protein is UPF0367 protein PMM0124 of Prochlorococcus marinus subsp. pastoris (strain CCMP1986 / NIES-2087 / MED4).